The sequence spans 546 residues: Chaperonin GroEL (546 aa).

Residues 29-32 (TLGP), Lys-50, 86-90 (DGTTT), Gly-414, 477-479 (NAL), and Asp-493 each bind ATP.

The protein belongs to the chaperonin (HSP60) family. Forms a cylinder of 14 subunits composed of two heptameric rings stacked back-to-back. Interacts with the co-chaperonin GroES.

The protein resides in the cytoplasm. The catalysed reaction is ATP + H2O + a folded polypeptide = ADP + phosphate + an unfolded polypeptide.. Functionally, together with its co-chaperonin GroES, plays an essential role in assisting protein folding. The GroEL-GroES system forms a nano-cage that allows encapsulation of the non-native substrate proteins and provides a physical environment optimized to promote and accelerate protein folding. The polypeptide is Chaperonin GroEL (Leptospira interrogans serogroup Icterohaemorrhagiae serovar Lai (strain 56601)).